The sequence spans 376 residues: 23S rRNA (uracil(747)-C(5))-methyltransferase RlmC (376 aa).

The [4Fe-4S] cluster site is built by Cys-3, Cys-11, Cys-14, and Cys-87. Positions 212, 241, 262, and 307 each coordinate S-adenosyl-L-methionine. Cys-334 serves as the catalytic Nucleophile.

Belongs to the class I-like SAM-binding methyltransferase superfamily. RNA M5U methyltransferase family. RlmC subfamily.

The enzyme catalyses uridine(747) in 23S rRNA + S-adenosyl-L-methionine = 5-methyluridine(747) in 23S rRNA + S-adenosyl-L-homocysteine + H(+). In terms of biological role, catalyzes the formation of 5-methyl-uridine at position 747 (m5U747) in 23S rRNA. This Salmonella newport (strain SL254) protein is 23S rRNA (uracil(747)-C(5))-methyltransferase RlmC.